The chain runs to 330 residues: Delta-aminolevulinic acid dehydratase (330 aa).

Zn(2+) is bound by residues cysteine 122, cysteine 124, histidine 131, and cysteine 132. Lysine 199 functions as the Schiff-base intermediate with substrate in the catalytic mechanism. At lysine 199 the chain carries N6-succinyllysine. Arginine 209 is a 5-aminolevulinate binding site. Position 215 is a phosphoserine (serine 215). Residue arginine 221 coordinates 5-aminolevulinate. Cysteine 223 lines the Zn(2+) pocket. Lysine 252 (schiff-base intermediate with substrate) is an active-site residue. N6-succinyllysine is present on lysine 252. 5-aminolevulinate is bound at residue serine 279.

The protein belongs to the ALAD family. As to quaternary structure, homooctamer; active form. Homohexamer; low activity form. Zn(2+) serves as cofactor.

It is found in the cytoplasm. It localises to the cytosol. The enzyme catalyses 2 5-aminolevulinate = porphobilinogen + 2 H2O + H(+). It functions in the pathway porphyrin-containing compound metabolism; protoporphyrin-IX biosynthesis; coproporphyrinogen-III from 5-aminolevulinate: step 1/4. With respect to regulation, can alternate between a fully active homooctamer and a low-activity homohexamer. A bound magnesium ion may promote the assembly of the fully active homooctamer. The magnesium-binding site is absent in the low-activity homohexamer. Inhibited by compounds that favor the hexameric state. Inhibited by divalent lead ions. The lead ions partially displace the zinc cofactor. Its function is as follows. Catalyzes an early step in the biosynthesis of tetrapyrroles. Binds two molecules of 5-aminolevulinate per subunit, each at a distinct site, and catalyzes their condensation to form porphobilinogen. The sequence is that of Delta-aminolevulinic acid dehydratase (ALAD) from Pongo abelii (Sumatran orangutan).